The primary structure comprises 217 residues: Urease accessory protein UreF (217 aa).

This sequence belongs to the UreF family. As to quaternary structure, ureD, UreF and UreG form a complex that acts as a GTP-hydrolysis-dependent molecular chaperone, activating the urease apoprotein by helping to assemble the nickel containing metallocenter of UreC. The UreE protein probably delivers the nickel.

Its subcellular location is the cytoplasm. Functionally, required for maturation of urease via the functional incorporation of the urease nickel metallocenter. In Ruegeria pomeroyi (strain ATCC 700808 / DSM 15171 / DSS-3) (Silicibacter pomeroyi), this protein is Urease accessory protein UreF.